A 147-amino-acid polypeptide reads, in one-letter code: Large ribosomal subunit protein bL9 (147 aa).

Belongs to the bacterial ribosomal protein bL9 family.

Functionally, binds to the 23S rRNA. This is Large ribosomal subunit protein bL9 from Clostridium acetobutylicum (strain ATCC 824 / DSM 792 / JCM 1419 / IAM 19013 / LMG 5710 / NBRC 13948 / NRRL B-527 / VKM B-1787 / 2291 / W).